A 370-amino-acid chain; its full sequence is Actin-related protein 2/3 complex subunit 1A-B (370 aa).

WD repeat units follow at residues 6–45, 50–89, 140–179, 202–241, 244–284, and 322–365; these read FLLE…WVKC, EHNG…WKPT, PIRS…VDEK, SSGG…SVSQ, TEFL…TFVS, and LHQN…SYIQ.

It belongs to the WD repeat ARPC1 family. In terms of assembly, component of the Arp2/3 complex.

It localises to the cytoplasm. The protein resides in the cytoskeleton. Its subcellular location is the nucleus. Probably functions as a component of the Arp2/3 complex which is involved in regulation of actin polymerization and together with an activating nucleation-promoting factor (NPF) mediates the formation of branched actin networks. In addition to its role in the cytoplasmic cytoskeleton, the Arp2/3 complex also promotes actin polymerization in the nucleus, thereby regulating gene transcription and repair of damaged DNA. The polypeptide is Actin-related protein 2/3 complex subunit 1A-B (arpc1a-b) (Xenopus laevis (African clawed frog)).